The chain runs to 597 residues: Probable translation initiation factor IF-2 (597 aa).

A tr-type G domain is found at Leu10 to Lys226. Residues Gly19–Thr26 are G1. Gly19 to Thr26 contributes to the GTP binding site. The segment at Ala44–His48 is G2. A G3 region spans residues Asp81 to Gly84. Residues Asp81–His85 and Asn135–Asp138 contribute to the GTP site. The interval Asn135–Asp138 is G4. The G5 stretch occupies residues Ser203–Ile205.

The protein belongs to the TRAFAC class translation factor GTPase superfamily. Classic translation factor GTPase family. IF-2 subfamily.

Function in general translation initiation by promoting the binding of the formylmethionine-tRNA to ribosomes. Seems to function along with eIF-2. In Halorubrum lacusprofundi (strain ATCC 49239 / DSM 5036 / JCM 8891 / ACAM 34), this protein is Probable translation initiation factor IF-2.